A 79-amino-acid chain; its full sequence is UPF0349 protein GTNG_2908 (79 aa).

This sequence belongs to the UPF0349 family.

This is UPF0349 protein GTNG_2908 from Geobacillus thermodenitrificans (strain NG80-2).